The chain runs to 109 residues: Cytochrome c oxidase subunit 6A1, mitochondrial (109 aa).

Residues 1–24 (MAAAAGSRVFGLLGRSRLQLSRCM) constitute a mitochondrion transit peptide. The Mitochondrial matrix portion of the chain corresponds to 25–34 (SSGAHGEEGS). A helical membrane pass occupies residues 35–59 (ARMWKALTYFVALPGVGVSMLNVFL). The Mitochondrial intermembrane segment spans residues 60 to 109 (KSHHGEEERPEFVAYPHLRIRSKPFPWGDGNHTLFHNPHVNPLPTGYEDE).

Belongs to the cytochrome c oxidase subunit 6A family. Component of the cytochrome c oxidase (complex IV, CIV), a multisubunit enzyme composed of 14 subunits. The complex is composed of a catalytic core of 3 subunits MT-CO1, MT-CO2 and MT-CO3, encoded in the mitochondrial DNA, and 11 supernumerary subunits COX4I1 (or COX4I2), COX5A, COX5B, COX6A2 (or COX6A1), COX6B1 (or COX6B2), COX6C, COX7A1 (or COX7A2), COX7B, COX7C, COX8B and NDUFA4, which are encoded in the nuclear genome. The complex exists as a monomer or a dimer and forms supercomplexes (SCs) in the inner mitochondrial membrane with NADH-ubiquinone oxidoreductase (complex I, CI) and ubiquinol-cytochrome c oxidoreductase (cytochrome b-c1 complex, complex III, CIII), resulting in different assemblies (supercomplex SCI(1)III(2)IV(1) and megacomplex MCI(2)III(2)IV(2)).

The protein localises to the mitochondrion inner membrane. Its pathway is energy metabolism; oxidative phosphorylation. Component of the cytochrome c oxidase, the last enzyme in the mitochondrial electron transport chain which drives oxidative phosphorylation. The respiratory chain contains 3 multisubunit complexes succinate dehydrogenase (complex II, CII), ubiquinol-cytochrome c oxidoreductase (cytochrome b-c1 complex, complex III, CIII) and cytochrome c oxidase (complex IV, CIV), that cooperate to transfer electrons derived from NADH and succinate to molecular oxygen, creating an electrochemical gradient over the inner membrane that drives transmembrane transport and the ATP synthase. Cytochrome c oxidase is the component of the respiratory chain that catalyzes the reduction of oxygen to water. Electrons originating from reduced cytochrome c in the intermembrane space (IMS) are transferred via the dinuclear copper A center (CU(A)) of subunit 2 and heme A of subunit 1 to the active site in subunit 1, a binuclear center (BNC) formed by heme A3 and copper B (CU(B)). The BNC reduces molecular oxygen to 2 water molecules unsing 4 electrons from cytochrome c in the IMS and 4 protons from the mitochondrial matrix. In Bos taurus (Bovine), this protein is Cytochrome c oxidase subunit 6A1, mitochondrial (COX6A1).